Reading from the N-terminus, the 370-residue chain is Natural killer cell receptor 2B4 (370 aa).

The N-terminal stretch at 1–21 (MLGQVVTLILLLLLKVYQGKG) is a signal peptide. Ig-like domains follow at residues 22 to 127 (CQGS…FVFE) and 131 to 215 (PDKV…LNLT). Residues 22 to 229 (CQGSADHVVS…NAHQEFRFWP (208 aa)) are Extracellular-facing. Residues N71, N77, N89, N164, N181, N192, N200, and N213 are each glycosylated (N-linked (GlcNAc...) asparagine). Residues C157 and C199 are joined by a disulfide bond. Residues 230-250 (FLVIIVILSALFLGTLACFCV) traverse the membrane as a helical segment. Residues 251–370 (WRRKRKEKQS…KELENFDVYS (120 aa)) lie on the Cytoplasmic side of the membrane. 4 short sequence motifs (ITSM) span residues 269–274 (TIYEDV), 295–300 (TIYSMI), 315–320 (TLYSLI), and 340–345 (TIYEVI). Y271 carries the phosphotyrosine modification. The residue at position 297 (Y297) is a Phosphotyrosine; by FYN. Y317 bears the Phosphotyrosine mark. The tract at residues 324-370 (RKSGSRKRNHSPSFNSTIYEVIGKSQPKAQNPARLSRKELENFDVYS) is disordered. Phosphotyrosine; by FYN is present on Y342.

In terms of assembly, interacts with CD48. Interacts (via phosphorylated ITSM 1-4) with SH2D1A (via SH2 domain); SH2D1A probably mediates association with FYN. Interacts (via phosphorylated ITSM 3) with PTPN11/SHP-2, INPP5D/SHIP1, PTPN6/SHP-1 and CSK; binding of SH2D1A/SAP prevents association with PTPN11, PTPN6 and CSK; conflictingly a similar association has been described for phosphorylated ITSM 1 also including GRB2 and PLCG1. Interacts weakly (via phosphorylated ITSM 2) with PTPN11/SHP-2 and CSK. Interacts with SH2D1B. Interacts with PIK3R1; PI3K recruits SH2D1A. Interacts with MHC class I proteins; the interaction is proposed to prevent self-killing of NK cells. In terms of processing, N-linked glycosylation is essential for the binding to its ligand CD48. Also O-glycosylated, in contrast, O-linked sialylation has a negative impact on ligand binding. Post-translationally, phosphorylated by FYN and CSK on tyrosine residues following activation. Coligation with inhibitory receptors such as KIR2DL1 inhibits phosphorylation upon contact of NK cells with sensitive target cells. Expressed in spleen, PBL, followed by lung, liver, testis and small intestine. Expressed in all natural killer (NK) cells, monocytes and basophils, TCR-gamma/delta+ T-cells, monocytes, basophils, and on a subset of CD8(+) T-cells.

Its subcellular location is the membrane. It is found in the cell membrane. The protein resides in the membrane raft. In terms of biological role, heterophilic receptor of the signaling lymphocytic activation molecule (SLAM) family; its ligand is CD48. SLAM receptors triggered by homo- or heterotypic cell-cell interactions are modulating the activation and differentiation of a wide variety of immune cells and thus are involved in the regulation and interconnection of both innate and adaptive immune response. Activities are controlled by presence or absence of small cytoplasmic adapter proteins, SH2D1A/SAP and/or SH2D1B/EAT-2. Acts as activating natural killer (NK) cell receptor. Activating function implicates association with SH2D1A and FYN. Downstreaming signaling involves predominantly VAV1, and, to a lesser degree, INPP5D/SHIP1 and CBL. Signal attenuation in the absence of SH2D1A is proposed to be dependent on INPP5D and to a lesser extent PTPN6/SHP-1 and PTPN11/SHP-2. Stimulates NK cell cytotoxicity, production of IFN-gamma and granule exocytosis. Optimal expansion and activation of NK cells seems to be dependent on the engagement of CD244 with CD48 expressed on neighboring NK cells. Acts as costimulator in NK activation by enhancing signals by other NK receptors such as NCR3 and NCR1. At early stages of NK cell differentiation may function as an inhibitory receptor possibly ensuring the self-tolerance of developing NK cells. Involved in the regulation of CD8(+) T-cell proliferation; expression on activated T-cells and binding to CD48 provides costimulatory-like function for neighboring T-cells. Inhibits inflammatory responses in dendritic cells (DCs). The polypeptide is Natural killer cell receptor 2B4 (CD244) (Homo sapiens (Human)).